A 133-amino-acid chain; its full sequence is MAKGPNNAAQRARKKVKKNVADGIAHVHASFNNTIITITDRQGNALSWATAGGQGFKGSRKSTPFAAQVAAENAGRVAQDQGIKNLEVRIKGPGPGRESAVRALNALGIKIAVIEDVTPVPHNGCRPPKRRRI.

Belongs to the universal ribosomal protein uS11 family. In terms of assembly, part of the 30S ribosomal subunit. Interacts with proteins S7 and S18. Binds to IF-3.

Its function is as follows. Located on the platform of the 30S subunit, it bridges several disparate RNA helices of the 16S rRNA. Forms part of the Shine-Dalgarno cleft in the 70S ribosome. This is Small ribosomal subunit protein uS11 from Cupriavidus metallidurans (strain ATCC 43123 / DSM 2839 / NBRC 102507 / CH34) (Ralstonia metallidurans).